The chain runs to 721 residues: ATP-dependent zinc metalloprotease FtsH (721 aa).

Topologically, residues 1–44 (MYFLKKIVNLFSSKIESEDNNVKKDDLTQPRKQSPEARKRRNRR) are cytoplasmic. A helical membrane pass occupies residues 45–65 (IIFWLIILLIIGTIIGVIIYF). Over 66–190 (SVRKEYDNVI…AGIPSSGFNP (125 aa)) the chain is Extracellular. The chain crosses the membrane as a helical span at residues 191–211 (QVIISPLISIIFFIIFLYIIL). The Cytoplasmic portion of the chain corresponds to 212 to 721 (RVSKAQSDSL…KDKEKDQKSN (510 aa)). 279-286 (GPPGTGKT) lines the ATP pocket. H498 serves as a coordination point for Zn(2+). Residue E499 is part of the active site. Positions 502 and 577 each coordinate Zn(2+). The interval 686–721 (NKREASQKQANSSVEEAKVVDDEESIKDKEKDQKSN) is disordered. Over residues 700-721 (EEAKVVDDEESIKDKEKDQKSN) the composition is skewed to basic and acidic residues.

This sequence in the central section; belongs to the AAA ATPase family. The protein in the C-terminal section; belongs to the peptidase M41 family. As to quaternary structure, homohexamer. Requires Zn(2+) as cofactor.

The protein localises to the cell membrane. In terms of biological role, acts as a processive, ATP-dependent zinc metallopeptidase for both cytoplasmic and membrane proteins. Plays a role in the quality control of integral membrane proteins. The chain is ATP-dependent zinc metalloprotease FtsH from Ureaplasma parvum serovar 3 (strain ATCC 27815 / 27 / NCTC 11736).